Reading from the N-terminus, the 606-residue chain is Elongation factor 4 (606 aa).

The tr-type G domain maps to 7-189 (SRIRNFCIIA…AVVDRVPPPK (183 aa)). Residues 19–24 (DHGKST) and 136–139 (NKID) each bind GTP.

Belongs to the TRAFAC class translation factor GTPase superfamily. Classic translation factor GTPase family. LepA subfamily.

The protein localises to the cell inner membrane. It catalyses the reaction GTP + H2O = GDP + phosphate + H(+). Functionally, required for accurate and efficient protein synthesis under certain stress conditions. May act as a fidelity factor of the translation reaction, by catalyzing a one-codon backward translocation of tRNAs on improperly translocated ribosomes. Back-translocation proceeds from a post-translocation (POST) complex to a pre-translocation (PRE) complex, thus giving elongation factor G a second chance to translocate the tRNAs correctly. Binds to ribosomes in a GTP-dependent manner. The sequence is that of Elongation factor 4 from Parasynechococcus marenigrum (strain WH8102).